The following is a 212-amino-acid chain: NAD(P)H-quinone oxidoreductase subunit K, chloroplastic (212 aa).

[4Fe-4S] cluster contacts are provided by Cys-43, Cys-44, Cys-108, and Cys-139.

The protein belongs to the complex I 20 kDa subunit family. In terms of assembly, NDH is composed of at least 16 different subunits, 5 of which are encoded in the nucleus. The cofactor is [4Fe-4S] cluster.

It localises to the plastid. Its subcellular location is the chloroplast thylakoid membrane. The catalysed reaction is a plastoquinone + NADH + (n+1) H(+)(in) = a plastoquinol + NAD(+) + n H(+)(out). The enzyme catalyses a plastoquinone + NADPH + (n+1) H(+)(in) = a plastoquinol + NADP(+) + n H(+)(out). Functionally, NDH shuttles electrons from NAD(P)H:plastoquinone, via FMN and iron-sulfur (Fe-S) centers, to quinones in the photosynthetic chain and possibly in a chloroplast respiratory chain. The immediate electron acceptor for the enzyme in this species is believed to be plastoquinone. Couples the redox reaction to proton translocation, and thus conserves the redox energy in a proton gradient. The protein is NAD(P)H-quinone oxidoreductase subunit K, chloroplastic of Phaseolus vulgaris (Kidney bean).